The primary structure comprises 173 residues: Shikimate kinase 1 (173 aa).

14–19 contributes to the ATP binding site; sequence GAGKST. S18 contributes to the Mg(2+) binding site. 3 residues coordinate substrate: D36, R60, and G82. An ATP-binding site is contributed by R120. Position 140 (R140) interacts with substrate. Q157 contacts ATP.

Belongs to the shikimate kinase family. In terms of assembly, monomer. Mg(2+) is required as a cofactor.

It localises to the cytoplasm. The enzyme catalyses shikimate + ATP = 3-phosphoshikimate + ADP + H(+). Its pathway is metabolic intermediate biosynthesis; chorismate biosynthesis; chorismate from D-erythrose 4-phosphate and phosphoenolpyruvate: step 5/7. Its function is as follows. Catalyzes the specific phosphorylation of the 3-hydroxyl group of shikimic acid using ATP as a cosubstrate. This chain is Shikimate kinase 1, found in Citrobacter koseri (strain ATCC BAA-895 / CDC 4225-83 / SGSC4696).